The chain runs to 347 residues: Phosphate acyltransferase (347 aa).

It belongs to the PlsX family. As to quaternary structure, homodimer. Probably interacts with PlsY.

It is found in the cytoplasm. It carries out the reaction a fatty acyl-[ACP] + phosphate = an acyl phosphate + holo-[ACP]. It functions in the pathway lipid metabolism; phospholipid metabolism. Its function is as follows. Catalyzes the reversible formation of acyl-phosphate (acyl-PO(4)) from acyl-[acyl-carrier-protein] (acyl-ACP). This enzyme utilizes acyl-ACP as fatty acyl donor, but not acyl-CoA. This Syntrophotalea carbinolica (strain DSM 2380 / NBRC 103641 / GraBd1) (Pelobacter carbinolicus) protein is Phosphate acyltransferase.